The primary structure comprises 147 residues: Lysozyme C-1 (147 aa).

Residues 1–18 form the signal peptide; sequence MKALLTLVFCLLPLAAQG. Residues 19–147 form the C-type lysozyme domain; the sequence is KVYSRCELAA…VSKWIRGCRL (129 aa). 4 disulfide bridges follow: cysteine 24-cysteine 145, cysteine 48-cysteine 133, cysteine 82-cysteine 98, and cysteine 94-cysteine 112. Residues glutamate 53 and aspartate 70 contribute to the active site.

It belongs to the glycosyl hydrolase 22 family.

Its subcellular location is the secreted. It carries out the reaction Hydrolysis of (1-&gt;4)-beta-linkages between N-acetylmuramic acid and N-acetyl-D-glucosamine residues in a peptidoglycan and between N-acetyl-D-glucosamine residues in chitodextrins.. Lysozymes have primarily a bacteriolytic function; those in tissues and body fluids are associated with the monocyte-macrophage system and enhance the activity of immunoagents. This chain is Lysozyme C-1, found in Anas platyrhynchos (Mallard).